The primary structure comprises 164 residues: T-cell surface glycoprotein CD3 zeta chain (164 aa).

The N-terminal stretch at methionine 1 to alanine 21 is a signal peptide. Residues glutamine 22–lysine 30 lie on the Extracellular side of the membrane. A helical transmembrane segment spans residues leucine 31–leucine 51. Topologically, residues arginine 52–arginine 164 are cytoplasmic. The residue at position 58 (serine 58) is a Phosphoserine. ITAM domains lie at alanine 61–arginine 89, proline 100–methionine 128, and glutamate 131–glutamine 159. 7 positions are modified to phosphotyrosine: tyrosine 64, tyrosine 72, tyrosine 83, tyrosine 111, tyrosine 123, tyrosine 142, and tyrosine 153. The segment covering tyrosine 83–methionine 96 has biased composition (basic and acidic residues). The interval tyrosine 83 to tyrosine 111 is disordered. The tract at residues methionine 128–aspartate 154 is disordered.

It belongs to the CD3Z/FCER1G family. The TCR-CD3 complex is composed of a CD3D/CD3E and a CD3G/CD3E heterodimers that preferentially associate with TCRalpha and TCRbeta, respectively, to form TCRalpha/CD3E/CD3G and TCRbeta/CD3G/CD3E trimers. In turn, the hexamer interacts with CD3Z homodimer to form the TCR-CD3 complex. Alternatively, TCRalpha and TCRbeta can be replaced by TCRgamma and TCRdelta. Interacts with SLA. Interacts with TRAT1. Interacts with DOCK2. Interacts with SLA2. Interacts with SHB. Interacts with ZAP70. Interacts (tyrosine phosphorylated) with SHC1 (via SH2 domain). Interacts with PTPRC. Interacts with CRK; this interaction regulates CD3Z phosphorylation. Interacts (on T cell side) with CD81, ICAM1 and CD9 at immunological synapses between antigen-presenting cells and T cells. Interacts with CD160. Interacts with LY6E. The signaling subunit of immunoglobulin gamma (IgG) Fc receptor complex. As a homodimer or a heterodimer with FCER1G, associates with the ligand binding subunit FCGR3A (via transmembrane domain); this interaction is a prerequisite for Fc receptor complex expression on the cell surface. Interacts with CD5. In terms of assembly, (Microbial infection) Interacts with HIV-1 Nef; this interaction up-regulates the expression of the Fas ligand (FASLG) at the cell surface. As to quaternary structure, (Microbial infection) Interacts with HIV-2 Nef protein; this interaction induces down-regulation of cell surface TCR/CD3 complexes. Post-translationally, phosphorylated on Tyr residues after T-cell receptor triggering by LCK in association with CD4/CD8. In terms of tissue distribution, CD3Z is expressed in normal lymphoid tissue and in peripheral blood mononuclear cells (PBMCs).

Its subcellular location is the cell membrane. Its function is as follows. Part of the TCR-CD3 complex present on T-lymphocyte cell surface that plays an essential role in adaptive immune response. When antigen presenting cells (APCs) activate T-cell receptor (TCR), TCR-mediated signals are transmitted across the cell membrane by the CD3 chains CD3D, CD3E, CD3G and CD3Z. All CD3 chains contain immunoreceptor tyrosine-based activation motifs (ITAMs) in their cytoplasmic domain. Upon TCR engagement, these motifs become phosphorylated by Src family protein tyrosine kinases LCK and FYN, resulting in the activation of downstream signaling pathways. CD3Z ITAMs phosphorylation creates multiple docking sites for the protein kinase ZAP70 leading to ZAP70 phosphorylation and its conversion into a catalytically active enzyme. Plays an important role in intrathymic T-cell differentiation. Additionally, participates in the activity-dependent synapse formation of retinal ganglion cells (RGCs) in both the retina and dorsal lateral geniculate nucleus (dLGN). This chain is T-cell surface glycoprotein CD3 zeta chain (CD247), found in Homo sapiens (Human).